We begin with the raw amino-acid sequence, 282 residues long: Pantothenate synthetase (282 aa).

30–37 (MGNLHEGH) is an ATP binding site. H37 (proton donor) is an active-site residue. Q61 serves as a coordination point for (R)-pantoate. Position 61 (Q61) interacts with beta-alanine. Residue 149–152 (GEKD) participates in ATP binding. Q155 contacts (R)-pantoate. Residues V178 and 186 to 189 (KSSR) each bind ATP.

This sequence belongs to the pantothenate synthetase family. As to quaternary structure, homodimer.

The protein resides in the cytoplasm. The catalysed reaction is (R)-pantoate + beta-alanine + ATP = (R)-pantothenate + AMP + diphosphate + H(+). Its pathway is cofactor biosynthesis; (R)-pantothenate biosynthesis; (R)-pantothenate from (R)-pantoate and beta-alanine: step 1/1. Functionally, catalyzes the condensation of pantoate with beta-alanine in an ATP-dependent reaction via a pantoyl-adenylate intermediate. The protein is Pantothenate synthetase of Marinobacter nauticus (strain ATCC 700491 / DSM 11845 / VT8) (Marinobacter aquaeolei).